The following is a 569-amino-acid chain: Peroxisomal targeting signal receptor (569 aa).

Cys-9 is covalently cross-linked (Glycyl cysteine thioester (Cys-Gly) (interchain with G-Cter in ubiquitin)). The tract at residues Ala-10–Ser-32 is amphipathic helix 1 (AH1). Lys-21 participates in a covalent cross-link: Glycyl lysine isopeptide (Lys-Gly) (interchain with G-Cter in ubiquitin). The interval Ser-23–Gln-42 is disordered. The amphipathic helix 2 (AH2) stretch occupies residues Arg-57–Phe-72. Short sequence motifs (wxxxF/Y motif) lie at residues Trp-118–Phe-122 and Trp-183–Phe-187. The segment at Phe-218–Leu-234 is amphipathic helix 4 (AH4). The short motif at Trp-243–Phe-247 is the WxxxF/Y motif 3 element. TPR repeat units lie at residues Leu-272 to His-305, Val-306 to Asn-339, Leu-340 to Arg-377, Ala-378 to Asp-415, Ser-416 to Asp-449, Ala-450 to Phe-483, and Val-484 to Glu-517.

It belongs to the peroxisomal targeting signal receptor family. As to quaternary structure, interacts (via WxxxF/Y and LVxEF motifs) with PEX14; promoting translocation through the PEX13-PEX14 docking complex. In terms of processing, monoubiquitinated at Cys-9 by PEX2 during PEX5 passage through the retrotranslocation channel: monoubiquitination acts as a signal for PEX5 extraction and is required for proper export from peroxisomes and recycling. When PEX5 recycling is compromised, polyubiquitinated at Lys-21 by PEX10 during its passage through the retrotranslocation channel, leading to its degradation.

It is found in the cytoplasm. It localises to the cytosol. The protein localises to the peroxisome matrix. Functionally, receptor that mediates peroxisomal import of proteins containing a C-terminal PTS1-type tripeptide peroxisomal targeting signal (SKL-type). Binds to cargo proteins containing a PTS1 peroxisomal targeting signal in the cytosol, and translocates them into the peroxisome matrix by passing through the PEX13-PEX14 docking complex along with cargo proteins. PEX5 receptor is then retrotranslocated into the cytosol, leading to release of bound cargo in the peroxisome matrix, and reset for a subsequent peroxisome import cycle. The chain is Peroxisomal targeting signal receptor (PEX5) from Pichia angusta (Yeast).